The following is a 179-amino-acid chain: Large ribosomal subunit protein uL5 (179 aa).

This sequence belongs to the universal ribosomal protein uL5 family. Part of the 50S ribosomal subunit; part of the 5S rRNA/L5/L18/L25 subcomplex. Contacts the 5S rRNA and the P site tRNA. Forms a bridge to the 30S subunit in the 70S ribosome.

This is one of the proteins that bind and probably mediate the attachment of the 5S RNA into the large ribosomal subunit, where it forms part of the central protuberance. In the 70S ribosome it contacts protein S13 of the 30S subunit (bridge B1b), connecting the 2 subunits; this bridge is implicated in subunit movement. Contacts the P site tRNA; the 5S rRNA and some of its associated proteins might help stabilize positioning of ribosome-bound tRNAs. This chain is Large ribosomal subunit protein uL5, found in Bordetella avium (strain 197N).